The sequence spans 200 residues: MHCPFCQNPDTKVIDTRISDDGHSIRRRRECPNCGARFSTLETTMLLVKKRSGNVEQFDRNKVIAGVRKACQGRPIHEDDLKRLGQQVEEDLRARGVAQVPSDEVGKAILRPLKDLDEVAYLRFASVYQNFEDLEDFQHAIDALRDSDKMLVSACPAGQAETSISCGYQLSMTRVRIVPVMASSASMVTSSGHLVTSVTT.

Residues 3 to 34 (CPFCQNPDTKVIDTRISDDGHSIRRRRECPNC) fold into a zinc finger. Residues 46–136 (LLVKKRSGNV…VYQNFEDLED (91 aa)) form the ATP-cone domain.

This sequence belongs to the NrdR family. Requires Zn(2+) as cofactor.

In terms of biological role, negatively regulates transcription of bacterial ribonucleotide reductase nrd genes and operons by binding to NrdR-boxes. The polypeptide is Transcriptional repressor NrdR (Bifidobacterium animalis subsp. lactis (strain AD011)).